Here is a 247-residue protein sequence, read N- to C-terminus: ATP synthase subunit a, chloroplastic (247 aa).

5 helical membrane passes run 38–58, 95–115, 134–154, 199–219, and 220–240; these read QVLI…TIAV, VPFI…GALL, INTT…AGLT, LVVV…VMLL, and GLFT…AYIG.

Belongs to the ATPase A chain family. As to quaternary structure, F-type ATPases have 2 components, CF(1) - the catalytic core - and CF(0) - the membrane proton channel. CF(1) has five subunits: alpha(3), beta(3), gamma(1), delta(1), epsilon(1). CF(0) has four main subunits: a, b, b' and c.

It is found in the plastid. Its subcellular location is the chloroplast thylakoid membrane. In terms of biological role, key component of the proton channel; it plays a direct role in the translocation of protons across the membrane. This Nicotiana sylvestris (Wood tobacco) protein is ATP synthase subunit a, chloroplastic.